A 313-amino-acid chain; its full sequence is Olfactory receptor 1J2 (313 aa).

Over 1–25 the chain is Extracellular; the sequence is MSPENQSSVSEFLLLGLPIRPEQQA. N-linked (GlcNAc...) asparagine glycosylation is present at Asn5. Residues 26-49 traverse the membrane as a helical segment; sequence VFFTLFLGMYLTTVLGNLLIMLLI. Residues 50–57 lie on the Cytoplasmic side of the membrane; it reads QLDSHLHT. Residues 58 to 79 form a helical membrane-spanning segment; it reads PMYFFLSHLALTDISFSSVTVP. Topologically, residues 80-100 are extracellular; sequence KMLMDMRTKYKSILYEECISQ. Cysteines 97 and 189 form a disulfide. Residues 101–120 form a helical membrane-spanning segment; the sequence is MYFFIFFTDLDSFLITSMAY. The Cytoplasmic segment spans residues 121-139; that stretch reads DRYVAICHPLHYTVIMREE. A helical transmembrane segment spans residues 140–158; sequence LCVFLVAVSWILSCASSLS. Residues 159–196 lie on the Extracellular side of the membrane; it reads HTLLLTRLSFCAANTIPHVFCDLAALLKLSCSDIFLNE. The helical transmembrane segment at 197–219 threads the bilayer; the sequence is LVMFTVGVVVITLPFMCILVSYG. Over 220-236 the chain is Cytoplasmic; that stretch reads YIGATILRVPSTKGIHK. Residues 237 to 259 traverse the membrane as a helical segment; sequence ALSTCGSHLSVVSLYYGSIFGQY. Residues 260–272 lie on the Extracellular side of the membrane; the sequence is LFPTVSSSIDKDV. A helical transmembrane segment spans residues 273–292; sequence IVALMYTVVTPMLNPFIYSL. The Cytoplasmic segment spans residues 293–313; the sequence is RNRDMKEALGKLFSRATFFSW.

It belongs to the G-protein coupled receptor 1 family.

It localises to the cell membrane. Functionally, odorant receptor. The polypeptide is Olfactory receptor 1J2 (OR1J2) (Homo sapiens (Human)).